Reading from the N-terminus, the 397-residue chain is Acetyl-CoA acetyltransferase (397 aa).

The active-site Acyl-thioester intermediate is the Cys95. Residues Tyr187 and Lys230 each coordinate CoA. Residue Tyr187 coordinates K(+). The K(+) site is built by Ala246, Gly247, and Ala249. Residue Ser250 coordinates CoA. Val347 contacts K(+). Catalysis depends on proton acceptor residues His351 and Cys379.

The protein belongs to the thiolase-like superfamily. Thiolase family.

It localises to the peroxisome. The enzyme catalyses 2 acetyl-CoA = acetoacetyl-CoA + CoA. Essential for n-decane utilization. In Yarrowia lipolytica (strain CLIB 122 / E 150) (Yeast), this protein is Acetyl-CoA acetyltransferase (PAT1).